An 88-amino-acid chain; its full sequence is Chaplin-F (88 aa).

An N-terminal signal peptide occupies residues 1-36 (MYNPKEHFSMSRIAKGLALTSVAAAAVAGTAGVAAA). The region spanning 47–87 (SPGVLSGNVVQVPVHIPVNVCGNTIDVIGLLNPAFGNECEN) is the Chaplin domain. A disulfide bridge connects residues C67 and C85.

This sequence belongs to the chaplin family. Short chaplin subfamily. As to quaternary structure, homodimer; disulfide linked. About 20% of ChpF isolated from cell wall forms disulfide-bonded homodimers.

The protein localises to the cell surface. It localises to the secreted. It is found in the cell wall. Its subcellular location is the fimbrium. One of 8 partially redundant surface-active proteins required for efficient formation of aerial mycelium; the short chaplins assemble into a hydrophobic, amyloidal fibrillar surface layer that envelopes and protects aerial hyphae and spores, presumably anchored to the long chaplins. Chaplins have an overlapping function with the surface-active SapB peptide; chaplins are essential on minimal medium while on rich medium both chaplins and SapB are required for efficient aerial hyphae formation. Chaplins are also involved in cell attachment to a hydrophobic surface. Forms amyloid fibrils in vitro probably composed of stacked beta-sheets, at low extracellular concentrations individually restores the ability to form aerial hyphae to a chaplin-deficient strain. A small chaplin extract (ChpD, ChpE, ChpF, ChpG and ChpH) self-assembles into 2 different amyloids; small fibrils at the air-water interface form an amphipathic membrane that resembles spore-surface structures involved in aerial hyphae formation, and hydrophilic fibrils in solution that resemble the fibers that attach cells to a hydrophobic surface. At the air-water interface the hydrophilic surface is in contact with water (probably equivalent to the peptidoglycan layer), while the hydrophobic face is exposed to the air, making the surface of the aerial hyphae hydrophobic. A small chaplin extract applied to a chaplin-deficient strain restores aerial hyphae formation. The small chaplin extract forms an amyloid-like structure similar to that seen on the surface of cells without rodlets (rdlA-rdlB deletions), and is highly surface active, reducing surface tension from 72 to 26 mJ/m(2), which probably allows escape of hyphae from an aqueous environment into air. ChpF alone is less surface active at pH 3.0 than at pH 10.0, it reduces the surface tension of water from 72.8 mN/m to 50 mN/m at pH 3.0 or to 37 mN/m at pH 10.0. ChpF and ChpG are sufficient to restore the rodlet layer and hydrophobicity to a strain deleted for the other 6 chaplin genes. This is Chaplin-F from Streptomyces coelicolor (strain ATCC BAA-471 / A3(2) / M145).